The primary structure comprises 131 residues: Holo-[acyl-carrier-protein] synthase (131 aa).

Residues aspartate 8 and glutamate 63 each coordinate Mg(2+).

It belongs to the P-Pant transferase superfamily. AcpS family. Requires Mg(2+) as cofactor.

Its subcellular location is the cytoplasm. The enzyme catalyses apo-[ACP] + CoA = holo-[ACP] + adenosine 3',5'-bisphosphate + H(+). Transfers the 4'-phosphopantetheine moiety from coenzyme A to a Ser of acyl-carrier-protein. The chain is Holo-[acyl-carrier-protein] synthase from Shewanella halifaxensis (strain HAW-EB4).